A 178-amino-acid chain; its full sequence is MLWVLVGTVLPVMLLAAPPPINKLALFPDKSAWCEAKNITQIVGHSGCEAKSIQNRACLGQCFSYSVPNTFPQSTESLVHCDSCMPAQSMWEIVTLECPGHEEVPRVDKLVEKIVHCSCQACGKEPSHEGLNVYMQGEDGPGSQPGSHSHSHPHPGCQTPEPEEPPGAPQVEEEGAED.

A signal peptide spans 1-16; it reads MLWVLVGTVLPVMLLA. Cystine bridges form between C34–C84, C48–C98, C58–C117, C62–C119, and C81–C122. Residues 34–123 form the CTCK domain; the sequence is CEAKNITQIV…IVHCSCQACG (90 aa). The interval 130–178 is disordered; sequence GLNVYMQGEDGPGSQPGSHSHSHPHPGCQTPEPEEPPGAPQVEEEGAED.

It belongs to the DAN family. In terms of assembly, homodimer. As to expression, most abundant in lung, brain, intestine and kidney.

It is found in the secreted. Functionally, possible candidate as a tumor suppressor gene of neuroblastoma. May play an important role in preventing cells from entering the final stage (G1/S) of the transformation process. The protein is Neuroblastoma suppressor of tumorigenicity 1 (Nbl1) of Rattus norvegicus (Rat).